Here is a 485-residue protein sequence, read N- to C-terminus: Glycogen synthase (485 aa).

K15 contributes to the ADP-alpha-D-glucose binding site.

This sequence belongs to the glycosyltransferase 1 family. Bacterial/plant glycogen synthase subfamily.

The catalysed reaction is [(1-&gt;4)-alpha-D-glucosyl](n) + ADP-alpha-D-glucose = [(1-&gt;4)-alpha-D-glucosyl](n+1) + ADP + H(+). It functions in the pathway glycan biosynthesis; glycogen biosynthesis. Its function is as follows. Synthesizes alpha-1,4-glucan chains using ADP-glucose. This is Glycogen synthase from Thermosipho africanus (strain TCF52B).